Here is a 324-residue protein sequence, read N- to C-terminus: Putative divalent cation/proton antiporter TMEM165 (324 aa).

The first 33 residues, 1–33 (MAAAAPGNGRASAPRLLLLFLVPLLWAPAAVRA), serve as a signal peptide directing secretion. Over 34 to 89 (GPDEDLSHRNKEPPAPAQQLQPQPVAVQGPEPARVEKIFTPAAPVHTNKEDPATQT) the chain is Lumenal. A compositionally biased stretch (basic and acidic residues) spans 35–45 (PDEDLSHRNKE). The disordered stretch occupies residues 35–59 (PDEDLSHRNKEPPAPAQQLQPQPVA). The span at 50–59 (AQQLQPQPVA) shows a compositional bias: low complexity. The helical transmembrane segment at 90–110 (NLGFIHAFVAAISVIIVSELG) threads the bilayer. Over 111–126 (DKTFFIAAIMAMRYNR) the chain is Cytoplasmic. Residues 127 to 147 (LTVLAGAMLALGLMTCLSVLF) form a helical membrane-spanning segment. The Lumenal portion of the chain corresponds to 148-151 (GYAT). The chain crosses the membrane as a helical span at residues 152–172 (TVIPRVYTYYVSTVLFAIFGI). The Cytoplasmic portion of the chain corresponds to 173–228 (RMLREGLKMSPDEGQEELEEVQAELKKKDEEFQRTKLLNGPGDVETGTSITVPQKK). Residues 184–211 (DEGQEELEEVQAELKKKDEEFQRTKLLN) are a coiled coil. The chain crosses the membrane as a helical span at residues 229 to 249 (WLHFISPIFVQALTLTFLAEW). Residues 250–267 (GDRSQLTTIVLAAREDPY) are Lumenal-facing. The chain crosses the membrane as a helical span at residues 268–288 (GVAVGGTVGHCLCTGLAVIGG). Residues 289–299 (RMIAQKISVRT) lie on the Cytoplasmic side of the membrane. The chain crosses the membrane as a helical span at residues 300-320 (VTIIGGIVFLAFAFSALFISP). The Lumenal portion of the chain corresponds to 321 to 324 (DSGF).

It belongs to the GDT1 family. In terms of tissue distribution, ubiquitously expressed.

It localises to the golgi apparatus membrane. The catalysed reaction is Ca(2+)(in) + n H(+)(out) = Ca(2+)(out) + n H(+)(in). The enzyme catalyses Mn(2+)(in) + n H(+)(out) = Mn(2+)(out) + n H(+)(in). Putative divalent cation:proton antiporter that exchanges calcium or manganese ions for protons across the Golgi membrane. Mediates the reversible transport of calcium or manganese to the Golgi lumen driven by the proton gradient and possibly the membrane potential generated by V-ATPase. Provides calcium or manganese cofactors to resident Golgi enzymes and contributes to the maintenance of an acidic luminal Golgi pH required for proper functioning of the secretory pathway. Promotes Ca(2+) storage within the Golgi lumen of the mammary epithelial cells to be then secreted into milk. The transport mechanism and stoichiometry remains to be elucidated. This is Putative divalent cation/proton antiporter TMEM165 from Homo sapiens (Human).